The following is a 272-amino-acid chain: Probable proteasome subunit beta type-5 (272 aa).

Residues 1-61 constitute a propeptide, removed in mature form; it reads MNSIVSKYTQ…KHCLIKMNHG (61 aa). Catalysis depends on Thr62, which acts as the Nucleophile.

Belongs to the peptidase T1B family. In terms of assembly, the 26S proteasome consists of a 20S proteasome core and two 19S regulatory subunits. The 20S proteasome core is composed of 28 subunits that are arranged in four stacked rings, resulting in a barrel-shaped structure. The two end rings are each formed by seven alpha subunits, and the two central rings are each formed by seven beta subunits. The catalytic chamber with the active sites is on the inside of the barrel.

Its subcellular location is the cytoplasm. It is found in the nucleus. It carries out the reaction Cleavage of peptide bonds with very broad specificity.. Functionally, the proteasome is a multicatalytic proteinase complex which is characterized by its ability to cleave peptides with Arg, Phe, Tyr, Leu, and Glu adjacent to the leaving group at neutral or slightly basic pH. The proteasome has an ATP-dependent proteolytic activity. This chain is Probable proteasome subunit beta type-5 (pts1), found in Schizosaccharomyces pombe (strain 972 / ATCC 24843) (Fission yeast).